The chain runs to 136 residues: Sec-independent protein translocase protein TatB (136 aa).

Residues 2–22 (FGSVGWGELLVLLIVGLVVLG) form a helical membrane-spanning segment. Residues 107–136 (VTEPAPTPIVNPELAKPAEPGPTRYDADAT) form a disordered region.

The protein belongs to the TatB family. In terms of assembly, the Tat system comprises two distinct complexes: a TatABC complex, containing multiple copies of TatA, TatB and TatC subunits, and a separate TatA complex, containing only TatA subunits. Substrates initially bind to the TatABC complex, which probably triggers association of the separate TatA complex to form the active translocon.

It localises to the cell membrane. In terms of biological role, part of the twin-arginine translocation (Tat) system that transports large folded proteins containing a characteristic twin-arginine motif in their signal peptide across membranes. Together with TatC, TatB is part of a receptor directly interacting with Tat signal peptides. TatB may form an oligomeric binding site that transiently accommodates folded Tat precursor proteins before their translocation. This Mycobacteroides abscessus (strain ATCC 19977 / DSM 44196 / CCUG 20993 / CIP 104536 / JCM 13569 / NCTC 13031 / TMC 1543 / L948) (Mycobacterium abscessus) protein is Sec-independent protein translocase protein TatB.